A 376-amino-acid polypeptide reads, in one-letter code: Gibberellic acid methyltransferase 1 (376 aa).

The S-adenosyl-L-homocysteine site is built by Tyr-22, Cys-64, Asn-69, Asp-104, Leu-105, Ser-136, and Phe-137. A gibberellin A9-binding site is contributed by Trp-158. Positions 175, 179, 265, 266, 268, and 269 each coordinate Mg(2+).

Belongs to the methyltransferase superfamily. Type-7 methyltransferase family. SABATH subfamily. The cofactor is Mg(2+). Expressed in siliques, developing seeds, anthers and germinating seeds. Not detected in leaves, stems, flowers and roots.

It catalyses the reaction gibberellin A9 + S-adenosyl-L-methionine = O-methyl gibberellin A9 + S-adenosyl-L-homocysteine. Its activity is regulated as follows. Up-regulated by K(+) and NH(4+), down-regulated by Zn(2+), Cu(2+), Fe(2+) and Fe(3+). In terms of biological role, methylates the carboxyl group of several gibberellins (GAs). Substrate preference is GA9 &gt; GA20 &gt; GA3 &gt; GA4 &gt; GA34 &gt; GA51 &gt; GA1 &gt; GA19 &gt; GA12. No activity with diterpenes abietic acid and ent-kaurenoic acid. The chain is Gibberellic acid methyltransferase 1 (GAMT1) from Arabidopsis thaliana (Mouse-ear cress).